The following is a 166-amino-acid chain: ATP synthase subunit b (166 aa).

The helical transmembrane segment at threonine 15 to valine 37 threads the bilayer.

Belongs to the ATPase B chain family. As to quaternary structure, F-type ATPases have 2 components, F(1) - the catalytic core - and F(0) - the membrane proton channel. F(1) has five subunits: alpha(3), beta(3), gamma(1), delta(1), epsilon(1). F(0) has three main subunits: a(1), b(2) and c(10-14). The alpha and beta chains form an alternating ring which encloses part of the gamma chain. F(1) is attached to F(0) by a central stalk formed by the gamma and epsilon chains, while a peripheral stalk is formed by the delta and b chains.

It is found in the cell membrane. In terms of biological role, f(1)F(0) ATP synthase produces ATP from ADP in the presence of a proton or sodium gradient. F-type ATPases consist of two structural domains, F(1) containing the extramembraneous catalytic core and F(0) containing the membrane proton channel, linked together by a central stalk and a peripheral stalk. During catalysis, ATP synthesis in the catalytic domain of F(1) is coupled via a rotary mechanism of the central stalk subunits to proton translocation. Component of the F(0) channel, it forms part of the peripheral stalk, linking F(1) to F(0). The sequence is that of ATP synthase subunit b from Lactobacillus johnsonii (strain CNCM I-12250 / La1 / NCC 533).